The primary structure comprises 284 residues: Bifunctional protein FolD (284 aa).

Residues 166–168 (GAS) and Ile232 contribute to the NADP(+) site.

It belongs to the tetrahydrofolate dehydrogenase/cyclohydrolase family. Homodimer.

It catalyses the reaction (6R)-5,10-methylene-5,6,7,8-tetrahydrofolate + NADP(+) = (6R)-5,10-methenyltetrahydrofolate + NADPH. The enzyme catalyses (6R)-5,10-methenyltetrahydrofolate + H2O = (6R)-10-formyltetrahydrofolate + H(+). It participates in one-carbon metabolism; tetrahydrofolate interconversion. Catalyzes the oxidation of 5,10-methylenetetrahydrofolate to 5,10-methenyltetrahydrofolate and then the hydrolysis of 5,10-methenyltetrahydrofolate to 10-formyltetrahydrofolate. The chain is Bifunctional protein FolD from Alteromonas mediterranea (strain DSM 17117 / CIP 110805 / LMG 28347 / Deep ecotype).